A 583-amino-acid chain; its full sequence is Aspartate--tRNA ligase (583 aa).

Glu174 serves as a coordination point for L-aspartate. Positions 198–201 (QTFK) are aspartate. Arg220 is a binding site for L-aspartate. ATP-binding positions include 220–222 (RDE) and Gln229. Residue His445 participates in L-aspartate binding. Position 479 (Glu479) interacts with ATP. Position 486 (Arg486) interacts with L-aspartate. 531-534 (GLDR) is a binding site for ATP.

Belongs to the class-II aminoacyl-tRNA synthetase family. Type 1 subfamily. In terms of assembly, homodimer.

It is found in the cytoplasm. It catalyses the reaction tRNA(Asp) + L-aspartate + ATP = L-aspartyl-tRNA(Asp) + AMP + diphosphate. In terms of biological role, catalyzes the attachment of L-aspartate to tRNA(Asp) in a two-step reaction: L-aspartate is first activated by ATP to form Asp-AMP and then transferred to the acceptor end of tRNA(Asp). The protein is Aspartate--tRNA ligase of Flavobacterium psychrophilum (strain ATCC 49511 / DSM 21280 / CIP 103535 / JIP02/86).